The chain runs to 993 residues: Desmoglein-3 (993 aa).

Residues 1 to 23 (MTCLFPRALGSLALLMVVLLVQG) form the signal peptide. Residues 24 to 49 (ELHVKPGGQHREDGTALQLAKRRYKR) constitute a propeptide that is removed on maturation. 4 consecutive Cadherin domains span residues 50 to 157 (EWVK…PPIF), 158 to 267 (SQTI…FPVL), 268 to 388 (RESQ…PPSK), and 384 to 495 (RPPS…CPSV). Residues 50-617 (EWVKFAKPCR…YGESSWRLGP (568 aa)) are Extracellular-facing. 2 N-linked (GlcNAc...) asparagine glycosylation sites follow: Asn-110 and Asn-180. N-linked (GlcNAc...) asparagine glycans are attached at residues Asn-459 and Asn-546. The helical transmembrane segment at 618–638 (AAIGLILLGLLMLLLAPLLLL) threads the bilayer. Residues 639–993 (TCDCGSGPIG…LYTKETCSHL (355 aa)) are Cytoplasmic-facing. Positions 641 to 714 (DCGSGPIGGA…NTYAGGTMVE (74 aa)) are required for interaction with CTNND1 and localization at cell-cell junctions. A disordered region spans residues 845–876 (AKQAKPGPKDSGSGADTCARSMEVPQSGSNRY). Desmoglein repeat repeat units follow at residues 905–930 (MSTSGSVHPAVAIPDPLQLGNYLLTE) and 931–961 (TYSTSGSFAQPTTVTFDPHVTQNVTVTERVI).

As to quaternary structure, homodimer. Part of a complex that contains DSG3, PKP1, YAP1 and YWHAG; the complex is required for localization of DSG3 and YAP1 to the cell membrane in keratinocytes. Interacts with PKP2. Interacts with CTNND1; the interaction facilitates DSG3 localization and retention at cell-cell junctions. Interacts with CDH1; the interaction is required for CDH1 localization to developing adherens junctions. Interacts with RAC1; the interaction is required for DSG3 translocation to cell-cell junctions, organization of cortical F-actin bundles and actin anchoring at cell-cell junctions. Interacts with DSC3; the interaction may limit the interaction of DSC3 with p38MAPK family members and therefore repress p38MAPK signaling activation. As to expression, expressed in the basal layer of the outer root sheath of the telogen hair club, specifically at the cell membrane between the apex of the cells and the surrounding hair club (at protein level). Expression is less abundant between the lateral margins of the outer root sheath basal cells (at protein level). Expressed in epidermis. Expressed in the epithelium of the tongue.

It localises to the cell membrane. It is found in the cell junction. Its subcellular location is the desmosome. The protein localises to the cytoplasm. The protein resides in the tight junction. In terms of biological role, a component of desmosome cell-cell junctions which are required for positive regulation of cellular adhesion. Required for adherens and desmosome junction assembly in response to mechanical force in keratinocytes. Required for desmosome-mediated cell-cell adhesion of cells surrounding the telogen hair club and the basal layer of the outer root sheath epithelium, consequently is essential for the anchoring of telogen hairs in the hair follicle. Required for the maintenance of the epithelial barrier via promoting desmosome-mediated intercellular attachment of suprabasal epithelium to basal cells. May play a role in the protein stability of the desmosome plaque components DSP, JUP, PKP1, PKP2 and PKP3. Required for YAP1 localization at the plasma membrane in keratinocytes in response to mechanical strain, via the formation of an interaction complex composed of DSG3, PKP1 and YWHAG. May also be involved in the positive regulation of YAP1 target gene transcription and as a result cell proliferation. Positively regulates cellular contractility and cell junction formation via organization of cortical F-actin bundles and anchoring of actin to tight junctions, in conjunction with RAC1. The cytoplasmic pool of DSG3 is required for the localization of CDH1 and CTNNB1 at developing adherens junctions, potentially via modulation of SRC activity. Inhibits keratinocyte migration via suppression of p38MAPK signaling, may therefore play a role in moderating wound healing. The protein is Desmoglein-3 (Dsg3) of Mus musculus (Mouse).